The following is a 683-amino-acid chain: Elongation factor G 1 (683 aa).

One can recognise a tr-type G domain in the interval 3–278 (DKMRNIGIMA…AVVDFLPAPN (276 aa)). GTP-binding positions include 12-19 (AHIDAGKT), 76-80 (DTPGH), and 130-133 (NKMD).

This sequence belongs to the TRAFAC class translation factor GTPase superfamily. Classic translation factor GTPase family. EF-G/EF-2 subfamily.

The protein localises to the cytoplasm. In terms of biological role, catalyzes the GTP-dependent ribosomal translocation step during translation elongation. During this step, the ribosome changes from the pre-translocational (PRE) to the post-translocational (POST) state as the newly formed A-site-bound peptidyl-tRNA and P-site-bound deacylated tRNA move to the P and E sites, respectively. Catalyzes the coordinated movement of the two tRNA molecules, the mRNA and conformational changes in the ribosome. The protein is Elongation factor G 1 of Treponema denticola (strain ATCC 35405 / DSM 14222 / CIP 103919 / JCM 8153 / KCTC 15104).